A 104-amino-acid chain; its full sequence is Large ribosomal subunit protein bL21 (104 aa).

It belongs to the bacterial ribosomal protein bL21 family. In terms of assembly, part of the 50S ribosomal subunit. Contacts protein L20.

In terms of biological role, this protein binds to 23S rRNA in the presence of protein L20. In Helicobacter pylori (strain G27), this protein is Large ribosomal subunit protein bL21.